Here is a 72-residue protein sequence, read N- to C-terminus: Large ribosomal subunit protein bL31 (72 aa).

Zn(2+) is bound by residues cysteine 16, cysteine 18, cysteine 38, and cysteine 41.

It belongs to the bacterial ribosomal protein bL31 family. Type A subfamily. Part of the 50S ribosomal subunit. Zn(2+) is required as a cofactor.

In terms of biological role, binds the 23S rRNA. This chain is Large ribosomal subunit protein bL31, found in Aliivibrio salmonicida (strain LFI1238) (Vibrio salmonicida (strain LFI1238)).